Here is a 408-residue protein sequence, read N- to C-terminus: Multidrug resistance protein MdtG (408 aa).

10 consecutive transmembrane segments (helical) span residues 16 to 36 (LIVAWLGCFLTGAAFSLVMPF), 58 to 78 (IVFSITFLFSAIASPFWGGLA), 92 to 112 (LGMGIVMVLMGLAQNIWQFLI), 115 to 135 (ALLGLLGGFVPNANALIATQV), 146 to 166 (TLSTGGVSGALLGPMAGGLLA), 173 to 193 (PVFFITASVLILCFFVTLFCI), 221 to 241 (ILSLFVTTLIIQVATGSIAPI), 256 to 276 (VAFISGMIASVPGVAALLSAP), 290 to 310 (ILITALIFSVLLLIPMSYVQT), and 378 to 398 (AVFLVTAGVVLFNAVYSWNSL).

It belongs to the major facilitator superfamily. DHA1 family. MdtG (TC 2.A.1.2.20) subfamily.

It is found in the cell inner membrane. Confers resistance to fosfomycin and deoxycholate. This Escherichia coli (strain SMS-3-5 / SECEC) protein is Multidrug resistance protein MdtG.